The chain runs to 370 residues: Cell division protein DivIB (370 aa).

The disordered stretch occupies residues 1-65 (MKKKKDEELT…SNKKGTKRIV (65 aa)). The Cytoplasmic segment spans residues 1 to 74 (MKKKKDEELT…VKEQRLSRQK (74 aa)). 2 stretches are compositionally biased toward basic residues: residues 25–34 (SRFKRKRKAT) and 47–63 (RNNR…GTKR). The chain crosses the membrane as a helical span at residues 75–95 (LGILIGSTLIVIALFFGYFYS). The Extracellular segment spans residues 96–370 (SISRVQKFSV…STVNTQQDID (275 aa)). Residues 98-169 (SRVQKFSVSG…GKVKIKVKEN (72 aa)) enclose the POTRA domain. Positions 295–370 (SGWTDEAKAA…STVNTQQDID (76 aa)) are disordered. Composition is skewed to low complexity over residues 304–314 (ASESSKSAESS) and 327–342 (SESA…STET). Residues 356–370 (SSNAESTVNTQQDID) are compositionally biased toward polar residues.

It belongs to the FtsQ/DivIB family. DivIB subfamily.

It localises to the cell membrane. Cell division protein that may be involved in stabilizing or promoting the assembly of the division complex. The sequence is that of Cell division protein DivIB from Pediococcus pentosaceus (strain ATCC 25745 / CCUG 21536 / LMG 10740 / 183-1w).